The chain runs to 453 residues: MEDYLQGCRAALQESRPLHVVLGNEACDLDSTVSALALAFYLAKTTEAEEVFVPVLNIKRSELPLRGDIVFFLQKVHIPESILIFRDEIDLHALYQAGQLTLILVDHHILSKSDTALEEAVAEVLDHRPIEPKHCPPCHVSVELVGSCATLVTERILQGAPEILDRQTAALLHGTIILDCVNMDLKIGKATPKDSKYVEKLEALFPDLPKRNDIFDSLQKAKFDVSGLTTEQMLRKDQKTIYRQGVKVAISAIYMDLEAFLQRSNLLADLHAFCQAHSYDVLVAMTIFFNTHNEPVRQLAIFCPHVALQTTICEVLERSHSPPLKLTPASSTHPNLHAYLQGNTQVSRKKLLPLLQEALSAYFDSMKIPSGQPETADVSREQVDKELDRASNSLISGLSQDEEDPPLPPTPMNSLVDECPLDQGLPKLSAEAVFEKCSQISLSQSTTASLSKK.

At methionine 1 the chain carries N-acetylmethionine. Mn(2+) contacts are provided by aspartate 28, aspartate 30, aspartate 106, and aspartate 179. A DHH motif motif is present at residues 106-108 (DHH). The segment at 393 to 420 (SLISGLSQDEEDPPLPPTPMNSLVDECP) is essential for homodimerization. Residues 395-421 (ISGLSQDEEDPPLPPTPMNSLVDECPL) form a disordered region. At serine 399 the chain carries Phosphoserine. The residue at position 410 (threonine 410) is a Phosphothreonine. Phosphoserine is present on serine 414.

This sequence belongs to the PPase class C family. Prune subfamily. Homooligomer. Able to homodimerize via its C-terminal domain. Interacts with NME1. Interacts with GSK3; at focal adhesion complexes where paxillin and vinculin are colocalized. Interacts with alpha and beta tubulin. Mn(2+) serves as cofactor. As to expression, ubiquitously expressed. Seems to be overexpressed in aggressive sarcoma subtypes, such as leiomyosarcomas and malignant fibrous histiocytomas (MFH) as well as in the less malignant liposarcomas.

Its subcellular location is the cytoplasm. It is found in the nucleus. It localises to the cell junction. The protein resides in the focal adhesion. It catalyses the reaction diphosphate + H2O = 2 phosphate + H(+). Activated by magnesium ions and inhibited by manganese ions. Inhibited by dipyridamole, moderately sensitive to IBMX and inhibited by vinpocetine. Phosphodiesterase (PDE) that has higher activity toward cAMP than cGMP, as substrate. Plays a role in cell proliferation, migration and differentiation, and acts as a negative regulator of NME1. Plays a role in the regulation of neurogenesis. Involved in the regulation of microtubule polymerization. This is Exopolyphosphatase PRUNE1 from Homo sapiens (Human).